We begin with the raw amino-acid sequence, 101 residues long: Urease subunit beta (101 aa).

It belongs to the urease beta subunit family. As to quaternary structure, heterotrimer of UreA (gamma), UreB (beta) and UreC (alpha) subunits. Three heterotrimers associate to form the active enzyme.

It is found in the cytoplasm. The enzyme catalyses urea + 2 H2O + H(+) = hydrogencarbonate + 2 NH4(+). It participates in nitrogen metabolism; urea degradation; CO(2) and NH(3) from urea (urease route): step 1/1. This is Urease subunit beta from Mesorhizobium japonicum (strain LMG 29417 / CECT 9101 / MAFF 303099) (Mesorhizobium loti (strain MAFF 303099)).